The primary structure comprises 97 residues: Intermembrane phospholipid transport system binding protein MlaB (97 aa).

Residues 1–97 (MSESLSWMQT…YNLPADVLPR (97 aa)) enclose the STAS domain.

The complex is composed of two ATP-binding proteins (MlaF), two transmembrane proteins (MlaE), two cytoplasmic solute-binding proteins (MlaB) and six periplasmic solute-binding proteins (MlaD).

It localises to the cytoplasm. Functionally, part of the ABC transporter complex MlaFEDB, which is involved in a phospholipid transport pathway that maintains lipid asymmetry in the outer membrane by retrograde trafficking of phospholipids from the outer membrane to the inner membrane. MlaB plays critical roles in both the assembly and activity of the complex. May act by modulating MlaF structure and stability. The chain is Intermembrane phospholipid transport system binding protein MlaB from Escherichia coli (strain K12).